Here is a 340-residue protein sequence, read N- to C-terminus: Phosphoribosylformylglycinamidine cyclo-ligase (340 aa).

Belongs to the AIR synthase family.

It is found in the cytoplasm. It catalyses the reaction 2-formamido-N(1)-(5-O-phospho-beta-D-ribosyl)acetamidine + ATP = 5-amino-1-(5-phospho-beta-D-ribosyl)imidazole + ADP + phosphate + H(+). Its pathway is purine metabolism; IMP biosynthesis via de novo pathway; 5-amino-1-(5-phospho-D-ribosyl)imidazole from N(2)-formyl-N(1)-(5-phospho-D-ribosyl)glycinamide: step 2/2. The polypeptide is Phosphoribosylformylglycinamidine cyclo-ligase (Acetivibrio thermocellus (strain ATCC 27405 / DSM 1237 / JCM 9322 / NBRC 103400 / NCIMB 10682 / NRRL B-4536 / VPI 7372) (Clostridium thermocellum)).